Consider the following 396-residue polypeptide: Ribosomal RNA large subunit methyltransferase I (396 aa).

Positions 2 to 79 constitute a PUA domain; sequence SVRLVLAKGR…QAESIDIAFF (78 aa).

Belongs to the methyltransferase superfamily. RlmI family.

It localises to the cytoplasm. The enzyme catalyses cytidine(1962) in 23S rRNA + S-adenosyl-L-methionine = 5-methylcytidine(1962) in 23S rRNA + S-adenosyl-L-homocysteine + H(+). Its function is as follows. Specifically methylates the cytosine at position 1962 (m5C1962) of 23S rRNA. In Citrobacter koseri (strain ATCC BAA-895 / CDC 4225-83 / SGSC4696), this protein is Ribosomal RNA large subunit methyltransferase I.